Here is a 215-residue protein sequence, read N- to C-terminus: Vesicle-trafficking protein SEC22b (215 aa).

The Cytoplasmic portion of the chain corresponds to 1 to 190 (MVLLTMIARV…RQDAKYLNMR (190 aa)). In terms of domain architecture, Longin spans 6-119 (MIARVADGLP…YSFIEFDNYI (114 aa)). A v-SNARE coiled-coil homology domain is found at 134–194 (NLSSVNTELQ…KYLNMRSTYA (61 aa)). Residues 191–213 (STYAKLAAVAVFSVMLIVYIRFW) form a helical membrane-spanning segment. Residues 214–215 (WL) lie on the Lumenal side of the membrane.

Belongs to the synaptobrevin family. Component of 2 distinct SNARE complexes.

Its subcellular location is the endoplasmic reticulum membrane. It localises to the endoplasmic reticulum-Golgi intermediate compartment membrane. It is found in the golgi apparatus. The protein resides in the cis-Golgi network membrane. The protein localises to the trans-Golgi network membrane. Its subcellular location is the melanosome. SNARE involved in targeting and fusion of ER-derived transport vesicles with the Golgi complex as well as Golgi-derived retrograde transport vesicles with the ER. This is Vesicle-trafficking protein SEC22b from Xenopus tropicalis (Western clawed frog).